A 911-amino-acid polypeptide reads, in one-letter code: Desmoglein-1-gamma (911 aa).

Residues 1 to 23 (MDWHSFRIAALLLTSLVVLEVNS) form the signal peptide. Residues 24-49 (EFQIQVRDHNAKNGTIKWHSIRRQKR) constitute a propeptide that is removed on maturation. 3 Cadherin domains span residues 50–157 (EWIK…PPVF), 158–269 (SMTT…IPYL), and 270–389 (EQSS…QPGS). At 50–519 (EWIKFAAACR…PNVDNVHFGP (470 aa)) the chain is on the extracellular side. N-linked (GlcNAc...) (high mannose) asparagine glycosylation occurs at Asn-110. Asn-180 is a glycosylation site (N-linked (GlcNAc...) asparagine). An N-linked (GlcNAc...) asparagine glycan is attached at Asn-401. A helical membrane pass occupies residues 520–540 (AGIGLLIMGFLVLGLVPFLLI). Residues 541-911 (SCDCGGAPGG…GMIGNLSIPP (371 aa)) lie on the Cytoplasmic side of the membrane. Desmoglein repeat repeat units follow at residues 783-809 (AYPS…TVRE), 810-839 (SYTT…ERVV), 840-869 (GPIS…ERVI), and 870-897 (APGS…ERVI). Residues 898-911 (QPTSGMIGNLSIPP) form a Desmoglein repeat 5; truncated repeat.

In terms of assembly, interacts with DSC3; there is evidence to suggest that the interaction promotes cell-cell adhesion of keratinocytes. In terms of tissue distribution, expressed in epidermis, brain, liver, skeletal, muscle and testis.

It localises to the cell membrane. Its subcellular location is the cell junction. It is found in the desmosome. The protein resides in the cytoplasm. The protein localises to the nucleus. In terms of biological role, component of intercellular desmosome junctions. Involved in the interaction of plaque proteins and intermediate filaments mediating cell-cell adhesion. This chain is Desmoglein-1-gamma (Dsg1c), found in Mus musculus (Mouse).